The primary structure comprises 490 residues: N-succinylglutamate 5-semialdehyde dehydrogenase (490 aa).

220-225 (GSANTG) contacts NAD(+). Active-site residues include glutamate 243 and cysteine 277.

Belongs to the aldehyde dehydrogenase family. AstD subfamily.

It catalyses the reaction N-succinyl-L-glutamate 5-semialdehyde + NAD(+) + H2O = N-succinyl-L-glutamate + NADH + 2 H(+). Its pathway is amino-acid degradation; L-arginine degradation via AST pathway; L-glutamate and succinate from L-arginine: step 4/5. In terms of biological role, catalyzes the NAD-dependent reduction of succinylglutamate semialdehyde into succinylglutamate. The protein is N-succinylglutamate 5-semialdehyde dehydrogenase of Shigella dysenteriae serotype 1 (strain Sd197).